The following is a 641-amino-acid chain: Tetracycline resistance protein TetQ (641 aa).

In terms of domain architecture, tr-type G spans 1–244; sequence MNIINLGILA…AITSFILPPA (244 aa). Residues 10–17, 74–78, and 128–131 contribute to the GTP site; these read AHIDAGKT, DTPGH, and NKID.

The protein belongs to the TRAFAC class translation factor GTPase superfamily. Classic translation factor GTPase family. TetM/TetO subfamily.

Its function is as follows. Abolishes the inhibitory effect of tetracyclin on protein synthesis by a non-covalent modification of the ribosomes. The sequence is that of Tetracycline resistance protein TetQ (tetQ) from Xylanibacter ruminicola (Prevotella ruminicola).